A 135-amino-acid chain; its full sequence is Large ribosomal subunit protein uL16c (135 aa).

It belongs to the universal ribosomal protein uL16 family. In terms of assembly, part of the 50S ribosomal subunit.

It is found in the plastid. The protein localises to the chloroplast. The chain is Large ribosomal subunit protein uL16c from Gossypium hirsutum (Upland cotton).